A 182-amino-acid chain; its full sequence is Inner membrane assembly complex subunit 17 (182 aa).

A mitochondrion-targeting transit peptide spans 1 to 45 (MLKRRSNALITLSRTKLFPITTVAYYHRRLLNQQRRAVSTSPKKE). At 46 to 107 (IKSLEDLANL…EIPVKRFIRP (62 aa)) the chain is on the mitochondrial matrix side. The helical transmembrane segment at 108–127 (LWMFILMGSSVYLLLHFSWW) threads the bilayer. The stretch at 128 to 158 (KLEHEERESQLKKEVEILEHQLNELIIQDKT) forms a coiled coil. The Mitochondrial intermembrane segment spans residues 128–182 (KLEHEERESQLKKEVEILEHQLNELIIQDKTHNTSRGKGSNESTHMKPWYRRWFW).

This sequence belongs to the INA17 family. Component of the inner membrane assembly (INA) complex, composed of INA17 and INA22. Interacts with a subset of F(1)F(0)-ATP synthase subunits of the F(1)-domain and the peripheral stalk.

It is found in the mitochondrion inner membrane. Component of the INA complex (INAC) that promotes the biogenesis of mitochondrial F(1)F(0)-ATP synthase. INAC facilitates the assembly of the peripheral stalk and promotes the assembly of the catalytic F(1)-domain with the membrane-embedded F(0)-domain. In Saccharomyces cerevisiae (strain YJM789) (Baker's yeast), this protein is Inner membrane assembly complex subunit 17.